The primary structure comprises 521 residues: Type-1 glutamine synthetase 2 (521 aa).

The region spanning 76–176 is the GS beta-grasp domain; it reads NQIKISKSPF…FLMDFIGTNG (101 aa). The region spanning 183–521 is the GS catalytic domain; the sequence is PRSTLKKVIK…WELERYLEII (339 aa).

It belongs to the glutamine synthetase family.

The catalysed reaction is L-glutamate + NH4(+) + ATP = L-glutamine + ADP + phosphate + H(+). This is Type-1 glutamine synthetase 2 (glnA2) from Dictyostelium discoideum (Social amoeba).